The chain runs to 493 residues: MLELPIISISIFLPLISVLYILLFISQSKKADKAIYVMYVAVLSSVLTFISTIYILIEFDSSNPAYQFIERYAWLDKIGLEFHVGVDGISIFFVALTSFLTLICIIGSLFTVKKYIKEYLVCFLLMESFCIGAFTSVNLLLFYLFFEAILVPMYIIIGVWGGENRIYAALKFFLYTFFGSVFFLLSLIYIYSKIHNFDLTYIPELTGNIPLFTQQILWWAIFIAFAVKIPIIPFHTWLPDAHVQAPTSGSVILAGILLKFGGYGFLRVLLPLFSSVSQEFAIYVIYLSVIAIIYASLVALAQKDMKKMIAYSSIAHMGYVTIGIFSFTEAGVSGAIFQMLSHGVISSCLFLIVGTLYERLHTKEIAKYGGVASKMPVLATFFMIAMLGSVGLPGTSGFIGEFLSLLGIYKVNVIATFIAALGIILGAVYMLKLYKEVMLGEITNKEIMHFRDLYKYEIISIAPLILLIIYFGLMPSSILNVFRLSVESLLVKF.

Transmembrane regions (helical) follow at residues 5–25, 37–57, 89–109, 115–135, 139–159, 172–192, 216–236, 251–271, 280–300, 308–328, 334–354, 375–395, 411–431, and 458–478; these read PIIS…LLFI, VMYV…YILI, ISIF…IGSL, YIKE…GAFT, LLLF…IIGV, FFLY…YIYS, ILWW…PFHT, VILA…VLLP, FAIY…LVAL, MIAY…FSFT, GAIF…LIVG, MPVL…LPGT, VNVI…VYML, and IISI…PSSI.

Belongs to the complex I subunit 4 family.

It localises to the cell membrane. The enzyme catalyses a quinone + NADH + 5 H(+)(in) = a quinol + NAD(+) + 4 H(+)(out). Its function is as follows. NDH-1 shuttles electrons from NADH, via FMN and iron-sulfur (Fe-S) centers, to quinones in the respiratory chain. Couples the redox reaction to proton translocation (for every two electrons transferred, four hydrogen ions are translocated across the cytoplasmic membrane), and thus conserves the redox energy in a proton gradient. The sequence is that of NADH-quinone oxidoreductase subunit M (nuoM) from Rickettsia felis (strain ATCC VR-1525 / URRWXCal2) (Rickettsia azadi).